The following is a 607-amino-acid chain: Aspartate--tRNA(Asp/Asn) ligase (607 aa).

Glutamate 176 contributes to the L-aspartate binding site. An aspartate region spans residues 200-203 (QQFK). L-aspartate is bound by residues arginine 222 and histidine 456. 222–224 (RDE) is an ATP binding site. Glutamate 496 contributes to the ATP binding site. Position 503 (arginine 503) interacts with L-aspartate. Position 548-551 (548-551 (GIDR)) interacts with ATP.

The protein belongs to the class-II aminoacyl-tRNA synthetase family. Type 1 subfamily. Homodimer.

It is found in the cytoplasm. It catalyses the reaction tRNA(Asx) + L-aspartate + ATP = L-aspartyl-tRNA(Asx) + AMP + diphosphate. Aspartyl-tRNA synthetase with relaxed tRNA specificity since it is able to aspartylate not only its cognate tRNA(Asp) but also tRNA(Asn). Reaction proceeds in two steps: L-aspartate is first activated by ATP to form Asp-AMP and then transferred to the acceptor end of tRNA(Asp/Asn). The sequence is that of Aspartate--tRNA(Asp/Asn) ligase from Parvibaculum lavamentivorans (strain DS-1 / DSM 13023 / NCIMB 13966).